The sequence spans 368 residues: UDP-N-acetylglucosamine--N-acetylmuramyl-(pentapeptide) pyrophosphoryl-undecaprenol N-acetylglucosamine transferase (368 aa).

Residues 10-12 (TGG), N126, S200, I255, and Q300 each bind UDP-N-acetyl-alpha-D-glucosamine.

It belongs to the glycosyltransferase 28 family. MurG subfamily.

The protein localises to the cell membrane. The catalysed reaction is Mur2Ac(oyl-L-Ala-gamma-D-Glu-L-Lys-D-Ala-D-Ala)-di-trans,octa-cis-undecaprenyl diphosphate + UDP-N-acetyl-alpha-D-glucosamine = beta-D-GlcNAc-(1-&gt;4)-Mur2Ac(oyl-L-Ala-gamma-D-Glu-L-Lys-D-Ala-D-Ala)-di-trans,octa-cis-undecaprenyl diphosphate + UDP + H(+). The protein operates within cell wall biogenesis; peptidoglycan biosynthesis. Cell wall formation. Catalyzes the transfer of a GlcNAc subunit on undecaprenyl-pyrophosphoryl-MurNAc-pentapeptide (lipid intermediate I) to form undecaprenyl-pyrophosphoryl-MurNAc-(pentapeptide)GlcNAc (lipid intermediate II). This chain is UDP-N-acetylglucosamine--N-acetylmuramyl-(pentapeptide) pyrophosphoryl-undecaprenol N-acetylglucosamine transferase, found in Lactobacillus acidophilus (strain ATCC 700396 / NCK56 / N2 / NCFM).